The chain runs to 82 residues: Small ribosomal subunit protein uS17 (82 aa).

This sequence belongs to the universal ribosomal protein uS17 family. Part of the 30S ribosomal subunit.

Its function is as follows. One of the primary rRNA binding proteins, it binds specifically to the 5'-end of 16S ribosomal RNA. The polypeptide is Small ribosomal subunit protein uS17 (Shewanella sp. (strain W3-18-1)).